The following is a 94-amino-acid chain: Large ribosomal subunit protein uL24c (94 aa).

Belongs to the universal ribosomal protein uL24 family. As to quaternary structure, part of the 50S ribosomal subunit.

The protein localises to the plastid. Its subcellular location is the chloroplast. Functionally, one of two assembly initiator proteins, it binds directly to the 5'-end of the 23S rRNA, where it nucleates assembly of the 50S subunit. This is Large ribosomal subunit protein uL24c (rpl24) from Cyanidium caldarium (Red alga).